Consider the following 1247-residue polypeptide: Catenin delta-2 (1247 aa).

Disordered stretches follow at residues 1–50 (MFAR…TTSA), 134–238 (SGIL…SAFH), and 256–309 (LPAP…KSYS). A Phosphoserine modification is found at Ser-7. The span at 22–50 (PSASEKNSSLSPGLNTSNGDGSETETTSA) shows a compositional bias: polar residues. Positions 49–84 (SAILASVKEQELQFERLTRELEAERQIVASQLERCK) form a coiled coil. Residues 149 to 160 (SLLSQSALQLNS) show a composition bias toward low complexity. A compositionally biased stretch (polar residues) spans 172–207 (YHSNQTLALGDTAPSQLPARSTQARAAGQSFSQGTT). Arg-209 is subject to Omega-N-methylarginine. Pro residues predominate over residues 218-228 (PAPPPPPPREP). Arg-261 is modified (omega-N-methylarginine). Ser-264 and Ser-273 each carry phosphoserine. Polar residues predominate over residues 265 to 276 (PLTTTQGGSPTK). Arg-279 and Arg-293 each carry omega-N-methylarginine. Residues 296-309 (SPKQSPSRLAKSYS) show a composition bias toward polar residues. Phosphoserine occurs at positions 324, 357, 412, and 458. The stretch at 391 to 433 (GSRASYSSQHGHLAPELRALQSPEHHIDPIYEDRVYQKPPMRS) is one ARM 1 repeat. Positions 429 to 480 (PPMRSLSQSQGDPLPPAHTGTFRTSTAPSSPGVDSVPLQRTGSQHGPQNAAA) are disordered. The segment covering 466–475 (LQRTGSQHGP) has biased composition (polar residues). Ser-511 carries the phosphoserine modification. A Phosphotyrosine modification is found at Tyr-513. Residues 514 to 533 (SKSGPALPPEGTLARSPSID) are disordered. ARM repeat units follow at residues 537-576 (KDPR…HLCF), 579-618 (NKIK…NLVY), 623-663 (DDNK…NLSS), 679-721 (LTNA…NVSS), 725-770 (EARR…NLSY), 832-872 (PKGI…NLAA), 904-943 (VYIR…NMAL), and 997-1040 (MENA…SMWQ). Disordered regions lie at residues 1064–1131 (TIER…HTSR) and 1152–1176 (APAE…RKDY). A compositionally biased stretch (polar residues) spans 1072-1081 (PYSSSRTPSI). Ser-1087 and Ser-1098 each carry phosphoserine. Over residues 1087–1100 (SPNNRSASAPASPR) the composition is skewed to low complexity. Positions 1103–1112 (ISLKERKTDY) are enriched in basic and acidic residues.

The protein belongs to the beta-catenin family. Binds to E-cadherin at a juxtamembrane site within the cytoplasmic domain. Binds to PSEN1. Interacts with PDZD2. Interacts (via the extreme C-terminus) with FRMPD2 (via the PDZ 2 domain). Interacts with ZBTB33. Interacts with ARHGEF28. Interacts with CDK5. Interacts with CTNNB1. Interacts with GSK3A and GSK3B. Interacts with DNM2. Interacts with CCDC85B. O-glycosylated. Post-translationally, phosphorylated by CDK5. Phosphorylated by GSK3B. In terms of tissue distribution, expressed in neurons and glial cells. Isoform 2 was found to be the most predominant isoform in various brain regions. Expressed at neuromuscular junctions.

The protein localises to the nucleus. It is found in the cell junction. The protein resides in the adherens junction. It localises to the cell projection. Its subcellular location is the dendrite. The protein localises to the perikaryon. Its function is as follows. Has a critical role in neuronal development, particularly in the formation and/or maintenance of dendritic spines and synapses. Involved in the regulation of canonical Wnt signaling. It probably acts on beta-catenin turnover, facilitating beta-catenin interaction with GSK3B, phosphorylation, ubiquitination and degradation. May be involved in neuronal cell adhesion and tissue morphogenesis and integrity by regulating adhesion molecules. Functions as a transcriptional activator when bound to ZBTB33. In Mus musculus (Mouse), this protein is Catenin delta-2 (Ctnnd2).